The chain runs to 124 residues: Small ribosomal subunit protein uS12c (124 aa).

Disordered stretches follow at residues M1–P28 and A104–S124. Basic residues-rich tracts occupy residues E11–K20 and D109–S124.

Belongs to the universal ribosomal protein uS12 family. In terms of assembly, part of the 30S ribosomal subunit.

It localises to the plastid. The protein resides in the chloroplast. Functionally, with S4 and S5 plays an important role in translational accuracy. Located at the interface of the 30S and 50S subunits. In Porphyra purpurea (Red seaweed), this protein is Small ribosomal subunit protein uS12c (rps12).